Here is a 138-residue protein sequence, read N- to C-terminus: uncharacterized protein (138 aa).

A helical membrane pass occupies residues 11–33 (ILLGLTLSLTFLYPLIITLIILY).

It is found in the membrane. This is an uncharacterized protein from Aquifex aeolicus (strain VF5).